Consider the following 558-residue polypeptide: Dihydroxy-acid dehydratase (558 aa).

Asp78 contributes to the Mg(2+) binding site. Residue Cys119 participates in [2Fe-2S] cluster binding. Asp120 and Lys121 together coordinate Mg(2+). At Lys121 the chain carries N6-carboxylysine. Cys191 provides a ligand contact to [2Fe-2S] cluster. Position 443 (Glu443) interacts with Mg(2+). Catalysis depends on Ser469, which acts as the Proton acceptor.

The protein belongs to the IlvD/Edd family. Homodimer. It depends on [2Fe-2S] cluster as a cofactor. Mg(2+) serves as cofactor.

The enzyme catalyses (2R)-2,3-dihydroxy-3-methylbutanoate = 3-methyl-2-oxobutanoate + H2O. It carries out the reaction (2R,3R)-2,3-dihydroxy-3-methylpentanoate = (S)-3-methyl-2-oxopentanoate + H2O. It functions in the pathway amino-acid biosynthesis; L-isoleucine biosynthesis; L-isoleucine from 2-oxobutanoate: step 3/4. Its pathway is amino-acid biosynthesis; L-valine biosynthesis; L-valine from pyruvate: step 3/4. Its function is as follows. Functions in the biosynthesis of branched-chain amino acids. Catalyzes the dehydration of (2R,3R)-2,3-dihydroxy-3-methylpentanoate (2,3-dihydroxy-3-methylvalerate) into 2-oxo-3-methylpentanoate (2-oxo-3-methylvalerate) and of (2R)-2,3-dihydroxy-3-methylbutanoate (2,3-dihydroxyisovalerate) into 2-oxo-3-methylbutanoate (2-oxoisovalerate), the penultimate precursor to L-isoleucine and L-valine, respectively. This chain is Dihydroxy-acid dehydratase, found in Solidesulfovibrio magneticus (strain ATCC 700980 / DSM 13731 / RS-1) (Desulfovibrio magneticus).